The chain runs to 451 residues: ADP-specific phosphofructokinase (451 aa).

The region spanning 1 to 450 is the ADPK domain; it reads MSVPQDVSIF…FITYVNYLKR (450 aa). Residues Glu-261, Glu-291, and Asp-434 each contribute to the Mg(2+) site. Asp-434 serves as the catalytic Proton acceptor.

Belongs to the carbohydrate kinase PfkC family. It depends on Mg(2+) as a cofactor.

It localises to the cytoplasm. It catalyses the reaction beta-D-fructose 6-phosphate + ADP = beta-D-fructose 1,6-bisphosphate + AMP + H(+). It functions in the pathway carbohydrate degradation; glycolysis. Catalyzes the phosphorylation of fructose 6-phosphate to fructose 1,6-bisphosphate using ADP as the phosphate donor. The chain is ADP-specific phosphofructokinase from Pyrococcus abyssi (strain GE5 / Orsay).